Reading from the N-terminus, the 828-residue chain is MKLSRRHFMKANAVAAAAAVAGITIPIAVRAATEQSEAIHWDKAPCRFCGVGCGVLVGTQNGRIVASQGDPDAPVNRGLNCIKGYFLPKIMYGQDRLTQPLLRMRDGKFDKEGEFTPISWDKAFDIMAEKFKTALKEKGPNAIGMFGSGQSTIWEGYAAAKLFKAGFRSNNIDPNARHCMASAVVGFMRTFGMDEPMGCYDDIEQTDAFVLWGSNMAEMHPILWSRITDRRLSNSNVTVAVLSTYQHRSFELADNGMVFTPQTDLAILNYIANYIIQNNAVNEAFFTRHVNLRRGVTDIGYGLRPTHPLEKAAKNPGSDASEPMSFEEYKAFVADYTLEKTVAISGVPADQLEALAKLYADPKKKVISYWTMGFNQHTRGVWANNLVYNIHLLTGKISQPGCGPFSLTGQPSACGTAREVGTFAHRLPADMVVTNEKHRAIAEKLWQLPTGTIPEKIGLHAVAQDRALKDGTLNAYWVMCNNNMQAGPNINQERMPGWRDPRNFIVVSDPYPTVSALAADLILPTAMWVEKEGAYGNAERRTQFWRQQVKAPGESKSDLWQVVSFAKRFAVEEVWPEELLAQKPAYRGKTLYDVLFANDVTTRFPLSELAENQLNDESRDFGFYLQKGLFEEYAAFGRGHGHDLAPFDDYHKARGLRWPVVNGKETQWRYSEGHDPYVKAGEAYRFYGKPDGKAVIFALPYEPAAEAPDDEYDLWLSTGRVLEHWHTGSMTRRVPELHRAFPEAVLFIHPQDAKARDLRRGEKVRIISRRGEVVSVVETRGRNKPPRGLVYMPFFDAAQMTNVLTLDATDPLSKETDFKKCAVKLAKV.

The tat-type signal signal peptide spans 1–31; that stretch reads MKLSRRHFMKANAVAAAAAVAGITIPIAVRA. In terms of domain architecture, 4Fe-4S Mo/W bis-MGD-type spans 39–95; sequence IHWDKAPCRFCGVGCGVLVGTQNGRIVASQGDPDAPVNRGLNCIKGYFLPKIMYGQD. Positions 46, 49, 53, and 81 each coordinate [4Fe-4S] cluster. Mo-bis(molybdopterin guanine dinucleotide) contacts are provided by residues Lys83, Gln150, Asn175, Cys179, 212 to 219, 243 to 247, 262 to 264, Met372, Gln376, Asn482, 508 to 509, Lys531, Asp558, and 718 to 727; these read WGSNMAEM, STYQH, QTD, SD, and TGRVLEHWHT. Phe794 contacts substrate. Mo-bis(molybdopterin guanine dinucleotide)-binding residues include Asn802 and Lys819.

Belongs to the prokaryotic molybdopterin-containing oxidoreductase family. NasA/NapA/NarB subfamily. Component of the periplasmic nitrate reductase NapAB complex composed of NapA and NapB. [4Fe-4S] cluster serves as cofactor. The cofactor is Mo-bis(molybdopterin guanine dinucleotide). Post-translationally, predicted to be exported by the Tat system. The position of the signal peptide cleavage has not been experimentally proven.

It localises to the periplasm. The catalysed reaction is 2 Fe(II)-[cytochrome] + nitrate + 2 H(+) = 2 Fe(III)-[cytochrome] + nitrite + H2O. Its function is as follows. Catalytic subunit of the periplasmic nitrate reductase complex NapAB. Receives electrons from NapB and catalyzes the reduction of nitrate to nitrite. The protein is Periplasmic nitrate reductase of Pectobacterium carotovorum subsp. carotovorum (strain PC1).